The primary structure comprises 267 residues: Glutamate racemase (267 aa).

Substrate-binding positions include 13–14 (DS) and 45–46 (YG). C77 serves as the catalytic Proton donor/acceptor. Residue 78-79 (NT) participates in substrate binding. C192 acts as the Proton donor/acceptor in catalysis. 193–194 (TH) is a binding site for substrate.

Belongs to the aspartate/glutamate racemases family.

It carries out the reaction L-glutamate = D-glutamate. It functions in the pathway cell wall biogenesis; peptidoglycan biosynthesis. In terms of biological role, provides the (R)-glutamate required for cell wall biosynthesis. The polypeptide is Glutamate racemase (Sinorhizobium fredii (strain NBRC 101917 / NGR234)).